The following is a 146-amino-acid chain: Hemoglobin subunit beta (146 aa).

N-acetylvaline is present on Val-1. The 145-residue stretch at 2-146 (HLTGEEKSAV…VANALAHKYH (145 aa)) folds into the Globin domain. Thr-12 is modified (phosphothreonine). Ser-44 bears the Phosphoserine mark. N6-acetyllysine is present on Lys-59. Residue His-63 participates in heme b binding. At Lys-82 the chain carries N6-acetyllysine. Residue His-92 participates in heme b binding. S-nitrosocysteine is present on Cys-93. Lys-144 is subject to N6-acetyllysine.

The protein belongs to the globin family. In terms of assembly, heterotetramer of two alpha chains and two beta chains. As to expression, red blood cells.

Functionally, involved in oxygen transport from the lung to the various peripheral tissues. This chain is Hemoglobin subunit beta (HBB), found in Loris tardigradus (Slender loris).